Reading from the N-terminus, the 582-residue chain is 2-succinyl-5-enolpyruvyl-6-hydroxy-3-cyclohexene-1-carboxylate synthase (582 aa).

Belongs to the TPP enzyme family. MenD subfamily. In terms of assembly, homodimer. The cofactor is Mg(2+). Mn(2+) is required as a cofactor. Thiamine diphosphate serves as cofactor.

The enzyme catalyses isochorismate + 2-oxoglutarate + H(+) = 5-enolpyruvoyl-6-hydroxy-2-succinyl-cyclohex-3-ene-1-carboxylate + CO2. It functions in the pathway quinol/quinone metabolism; 1,4-dihydroxy-2-naphthoate biosynthesis; 1,4-dihydroxy-2-naphthoate from chorismate: step 2/7. The protein operates within cofactor biosynthesis; phylloquinone biosynthesis. In terms of biological role, catalyzes the thiamine diphosphate-dependent decarboxylation of 2-oxoglutarate and the subsequent addition of the resulting succinic semialdehyde-thiamine pyrophosphate anion to isochorismate to yield 2-succinyl-5-enolpyruvyl-6-hydroxy-3-cyclohexene-1-carboxylate (SEPHCHC). The chain is 2-succinyl-5-enolpyruvyl-6-hydroxy-3-cyclohexene-1-carboxylate synthase from Synechococcus elongatus (strain ATCC 33912 / PCC 7942 / FACHB-805) (Anacystis nidulans R2).